The sequence spans 210 residues: dTTP/UTP pyrophosphatase (210 aa).

D80 serves as the catalytic Proton acceptor.

The protein belongs to the Maf family. YhdE subfamily. Requires a divalent metal cation as cofactor.

The protein resides in the cytoplasm. The catalysed reaction is dTTP + H2O = dTMP + diphosphate + H(+). It carries out the reaction UTP + H2O = UMP + diphosphate + H(+). Functionally, nucleoside triphosphate pyrophosphatase that hydrolyzes dTTP and UTP. May have a dual role in cell division arrest and in preventing the incorporation of modified nucleotides into cellular nucleic acids. This is dTTP/UTP pyrophosphatase from Nitratidesulfovibrio vulgaris (strain ATCC 29579 / DSM 644 / CCUG 34227 / NCIMB 8303 / VKM B-1760 / Hildenborough) (Desulfovibrio vulgaris).